A 309-amino-acid chain; its full sequence is Ribonuclease Z (309 aa).

Positions 63, 65, 67, 68, 145, 216, and 274 each coordinate Zn(2+). Asp-67 functions as the Proton acceptor in the catalytic mechanism.

Belongs to the RNase Z family. Homodimer. Zn(2+) is required as a cofactor.

The catalysed reaction is Endonucleolytic cleavage of RNA, removing extra 3' nucleotides from tRNA precursor, generating 3' termini of tRNAs. A 3'-hydroxy group is left at the tRNA terminus and a 5'-phosphoryl group is left at the trailer molecule.. In terms of biological role, zinc phosphodiesterase, which displays some tRNA 3'-processing endonuclease activity. Probably involved in tRNA maturation, by removing a 3'-trailer from precursor tRNA. In Streptococcus thermophilus (strain CNRZ 1066), this protein is Ribonuclease Z.